A 462-amino-acid polypeptide reads, in one-letter code: DNA polymerase delta subunit 3 (462 aa).

Ala-2 is modified (N-acetylalanine). 4 disordered regions span residues 144-186 (APAE…ASQQ), 200-230 (TKTQDTNKETKPEAREVTSASSAGGKAPGKG), 254-384 (AVKE…RVLK), and 403-462 (SESC…FQKK). A compositionally biased stretch (polar residues) spans 156–174 (QSNLQAASEAQASELTTNG). Residues 204-215 (DTNKETKPEARE) show a composition bias toward basic and acidic residues. Residues 218–230 (SASSAGGKAPGKG) show a composition bias toward low complexity. A Glycyl lysine isopeptide (Lys-Gly) (interchain with G-Cter in SUMO); alternate cross-link involves residue Lys-256. Lys-256 participates in a covalent cross-link: Glycyl lysine isopeptide (Lys-Gly) (interchain with G-Cter in SUMO2); alternate. Residue Lys-259 forms a Glycyl lysine isopeptide (Lys-Gly) (interchain with G-Cter in SUMO2) linkage. Basic and acidic residues predominate over residues 284–305 (RKSEPGKVQQKEKSSRGKRVDL). Phosphoserine is present on Ser-306. Over residues 330-344 (SSEDEVFEDSPEMYE) the composition is skewed to acidic residues. A compositionally biased stretch (pro residues) spans 348–368 (PSPPPVSPPPDPMPKTEPPPV). A phosphoserine mark is found at Ser-403 and Ser-405. The residue at position 407 (Thr-407) is a Phosphothreonine. At Ser-409 the chain carries Phosphoserine. The span at 416 to 427 (KPASAHKPPAAA) shows a compositional bias: low complexity. Residues 428-437 (VKREPREERK) are compositionally biased toward basic and acidic residues. Lys-429 is covalently cross-linked (Glycyl lysine isopeptide (Lys-Gly) (interchain with G-Cter in SUMO); alternate). A Glycyl lysine isopeptide (Lys-Gly) (interchain with G-Cter in SUMO2); alternate cross-link involves residue Lys-429. The segment covering 451–462 (RQVSITGFFQKK) has biased composition (polar residues). The PIP-box signature appears at 452 to 459 (QVSITGFF). Residue Ser-454 is modified to Phosphoserine.

Component of both the DNA polymerase delta and DNA polymerase zeta complexes. The tetrameric DNA polymerase delta complex (Pol-delta4), which consists of POLD1/p125, POLD2/p50, POLD3/p66/p68 and POLD4/p12, with POLD1 bearing DNA polymerase and 3' to 5' proofreading exonuclease activities. Within this complex, directly interacts with POLD2. Following stress caused by DNA damaging agents or by replication stress, POLD4 is degraded and Pol-delta4 is converted into a trimeric form of the complex (Pol-delta3), which consists of POLD1, POLD2 and POLD3. Pol-delta3 is the major form occurring at S phase replication sites, as well as DNA damage sites. Directly interacts with PCNA, as do POLD1 and POLD4; this interaction stimulates Pol-delta polymerase activity. POLD3 phosphorylation at Ser-454 impairs PCNA binding. Component of the DNA polymerase zeta complex (POLZ), which consists of REV3L, MAD2L2, POLD2 and POLD3, with REV3L bearing DNA polymerase catalytic activity. The DNA polymerase delta complex interacts with POLDIP2; this interaction is probably mediated through direct binding to POLD2. Ubiquitinated, but not targeted to the proteasome. Sumoylated. Sumoylation by SUMO3 may be predominant. Post-translationally, phosphorylation at Ser-454 is thought to decrease the affinity for PCNA and Pol-delta4 processivity. May be phosphorylated by CDK1-cyclin-A complex, as well as CDK2-cyclin-A and CDK2-cyclin-E complexes. PCNA interferes with CDK-cyclin phosphorylation.

The protein resides in the cytoplasm. Its subcellular location is the nucleus. Its function is as follows. Accessory component of both the DNA polymerase delta complex and the DNA polymerase zeta complex. As a component of the trimeric and tetrameric DNA polymerase delta complexes (Pol-delta3 and Pol-delta4, respectively), plays a role in high fidelity genome replication, including in lagging strand synthesis, and repair. Required for optimal Pol-delta activity. Stabilizes the Pol-delta complex and plays a major role in Pol-delta stimulation by PCNA. Pol-delta3 and Pol-delta4 are characterized by the absence or the presence of POLD4. They exhibit differences in catalytic activity. Most notably, Pol-delta3 shows higher proofreading activity than Pol-delta4. Although both Pol-delta3 and Pol-delta4 process Okazaki fragments in vitro, Pol-delta3 may also be better suited to fulfill this task, exhibiting near-absence of strand displacement activity compared to Pol-delta4 and stalling on encounter with the 5'-blocking oligonucleotides. Pol-delta3 idling process may avoid the formation of a gap, while maintaining a nick that can be readily ligated. Along with DNA polymerase kappa, DNA polymerase delta carries out approximately half of nucleotide excision repair (NER) synthesis following UV irradiation. In this context, POLD3, along with PCNA and RFC1-replication factor C complex, is required to recruit POLD1, the catalytic subunit of the polymerase delta complex, to DNA damage sites. Under conditions of DNA replication stress, required for the repair of broken replication forks through break-induced replication (BIR). Involved in the translesion synthesis (TLS) of templates carrying O6-methylguanine or abasic sites performed by Pol-delta4, independently of DNA polymerase zeta (REV3L) or eta (POLH). Facilitates abasic site bypass by DNA polymerase delta by promoting extension from the nucleotide inserted opposite the lesion. Also involved in TLS, as a component of the tetrameric DNA polymerase zeta complex. Along with POLD2, dramatically increases the efficiency and processivity of DNA synthesis of the DNA polymerase zeta complex compared to the minimal zeta complex, consisting of only REV3L and REV7. This is DNA polymerase delta subunit 3 (Pold3) from Mus musculus (Mouse).